The primary structure comprises 424 residues: METIFALSSGAPPAAIGVIRISGTEARGALEALAGSVPDARKAALRRLRDGEGKTLDDALVLWLPGPDNATGEDCVELHCHGGRAVIAAIERTLGTMPGLRRAEPGEFTRRAFANGRIDLAEAEGLADLLFAETELQRQVLQASAGGRLSELVGGWRERVLALSAQVESALDFSDEDDVDELAPAFYTDVSTLADELGEWLERPQVERLRDGVRVVFAGPPNAGKSTLFNALLQSEAAIVSPIAGTTRDVLERPVAFGGTPFTLIDTAGLHEGGDDSIERIGIDRARAALRDADIVLWLGPEGEGPDNAWEIDAQSDIDERTAKSAPRLRLSAKTGEGIDALVRDLRDAARDLLPRPGDVAVNARQHALLSEAAGELAEITRGQDLLITAEHLRTARSAFDRFTGRATTEDMLDALFGRFCIGK.

Arg20, Glu77, and Arg117 together coordinate (6S)-5-formyl-5,6,7,8-tetrahydrofolate. The 140-residue stretch at 212–351 (GVRVVFAGPP…LVRDLRDAAR (140 aa)) folds into the TrmE-type G domain. Asn222 is a binding site for K(+). GTP contacts are provided by residues 222 to 227 (NAGKST), 241 to 247 (SPIAGTT), and 266 to 269 (DTAG). Position 226 (Ser226) interacts with Mg(2+). Ser241, Ile243, and Thr246 together coordinate K(+). Residue Thr247 participates in Mg(2+) binding. Lys424 serves as a coordination point for (6S)-5-formyl-5,6,7,8-tetrahydrofolate.

The protein belongs to the TRAFAC class TrmE-Era-EngA-EngB-Septin-like GTPase superfamily. TrmE GTPase family. In terms of assembly, homodimer. Heterotetramer of two MnmE and two MnmG subunits. It depends on K(+) as a cofactor.

The protein resides in the cytoplasm. Its function is as follows. Exhibits a very high intrinsic GTPase hydrolysis rate. Involved in the addition of a carboxymethylaminomethyl (cmnm) group at the wobble position (U34) of certain tRNAs, forming tRNA-cmnm(5)s(2)U34. The polypeptide is tRNA modification GTPase MnmE (Erythrobacter litoralis (strain HTCC2594)).